The chain runs to 562 residues: Probable tRNA (uracil-O(2)-)-methyltransferase (562 aa).

Residues 520 to 546 (VSRRQQTNPKKQEATNRPKQPCWMSLN) are disordered. The C3H1-type zinc-finger motif lies at 535-562 (NRPKQPCWMSLNHPDGCPLGPESCRYLH).

It belongs to the TRM44 family.

It is found in the cytoplasm. The catalysed reaction is uridine(44) in tRNA(Ser) + S-adenosyl-L-methionine = 2'-O-methyluridine(44) in tRNA(Ser) + S-adenosyl-L-homocysteine + H(+). Functionally, probable adenosyl-L-methionine (AdoMet)-dependent tRNA (uracil-O(2)-)-methyltransferase. The protein is Probable tRNA (uracil-O(2)-)-methyltransferase of Caenorhabditis briggsae.